A 775-amino-acid chain; its full sequence is Kazrin (775 aa).

Positions 38–66 are disordered; it reads AELSGGGGPGPGPGAAASASAAGDSAATN. The segment covering 51-64 has biased composition (low complexity); sequence GAAASASAAGDSAA. Residues 74–256 are a coiled coil; the sequence is AQVLLREEVS…LATLTKDVPK (183 aa). Positions 174–333 are interaction with PPL; that stretch reads RDFIRNYEQH…SAAEGDRSST (160 aa). The tract at residues 290–427 is disordered; the sequence is QQTLYHSHPP…QSLSLSEGEE (138 aa). Phosphoserine occurs at positions 352, 367, and 387. Over residues 411 to 422 the composition is skewed to polar residues; that stretch reads SQCSPTRQSLSL. 3 SAM domains span residues 446-511, 524-588, and 612-679; these read WKAG…YRDA, DHHW…LYQV, and WTNQ…SAVF. 2 disordered regions span residues 688 to 715 and 729 to 762; these read REAE…SSGL and RGFS…LEQC. A compositionally biased stretch (basic and acidic residues) spans 732 to 742; it reads SSKDPDFHDDY.

The protein belongs to the kazrin family. Isoform 2, isoform 3 and isoform 4 interact with PPL N-terminus. As to expression, isoform 2, isoform 3 and isoform 4 are expressed in several cell lines including keratinocytes and bladder and epidermoid carcinoma (at protein level). Isoform 2, isoform 3 and isoform 4 are expressed in hair follicle and interfollicular epidermis (at protein level).

Its subcellular location is the cytoplasm. It localises to the cytoskeleton. The protein resides in the cell junction. The protein localises to the desmosome. It is found in the nucleus. Its function is as follows. Component of the cornified envelope of keratinocytes. May be involved in the interplay between adherens junctions and desmosomes. The function in the nucleus is not known. The protein is Kazrin of Homo sapiens (Human).